The primary structure comprises 559 residues: Dihydroxy-acid dehydratase 2 (559 aa).

[2Fe-2S] cluster is bound at residue Cys53. Asp85 is a binding site for Mg(2+). Cys126 provides a ligand contact to [2Fe-2S] cluster. Residues Asp127 and Lys128 each coordinate Mg(2+). Lys128 carries the N6-carboxylysine modification. Cys195 contributes to the [2Fe-2S] cluster binding site. Glu446 contacts Mg(2+). Ser472 functions as the Proton acceptor in the catalytic mechanism.

The protein belongs to the IlvD/Edd family. Homodimer. Requires [2Fe-2S] cluster as cofactor. The cofactor is Mg(2+).

The catalysed reaction is (2R)-2,3-dihydroxy-3-methylbutanoate = 3-methyl-2-oxobutanoate + H2O. The enzyme catalyses (2R,3R)-2,3-dihydroxy-3-methylpentanoate = (S)-3-methyl-2-oxopentanoate + H2O. It functions in the pathway amino-acid biosynthesis; L-isoleucine biosynthesis; L-isoleucine from 2-oxobutanoate: step 3/4. Its pathway is amino-acid biosynthesis; L-valine biosynthesis; L-valine from pyruvate: step 3/4. In terms of biological role, functions in the biosynthesis of branched-chain amino acids. Catalyzes the dehydration of (2R,3R)-2,3-dihydroxy-3-methylpentanoate (2,3-dihydroxy-3-methylvalerate) into 2-oxo-3-methylpentanoate (2-oxo-3-methylvalerate) and of (2R)-2,3-dihydroxy-3-methylbutanoate (2,3-dihydroxyisovalerate) into 2-oxo-3-methylbutanoate (2-oxoisovalerate), the penultimate precursor to L-isoleucine and L-valine, respectively. The protein is Dihydroxy-acid dehydratase 2 of Pseudoalteromonas translucida (strain TAC 125).